Consider the following 380-residue polypeptide: Pregnancy-associated glycoprotein 4 (380 aa).

The first 15 residues, 1–15, serve as a signal peptide directing secretion; the sequence is MKWLVLLGLVAFSEC. The propeptide at 16–53 is activation peptide; the sequence is IFKIPLRRVKTMRKTLSGKNMLNDVLKEHPYRLPQISF. The region spanning 71–377 is the Peptidase A1 domain; that stretch reads YVGNITIGTP…DRGNDRIGLA (307 aa). An N-linked (GlcNAc...) asparagine glycan is attached at N74. Residue D89 is part of the active site. C102 and C107 are disulfide-bonded. A glycan (N-linked (GlcNAc...) asparagine) is linked at N125. A disulfide bridge connects residues C261 and C265. D270 is an active-site residue. A disulfide bridge links C303 with C337.

The protein belongs to the peptidase A1 family. Trophoblast and placental tissue. Produced specifically in the invasive binucleate cells of the placenta.

The protein localises to the secreted. It localises to the extracellular space. The polypeptide is Pregnancy-associated glycoprotein 4 (Ovis aries (Sheep)).